The sequence spans 381 residues: Alcohol dehydrogenase class-3 (381 aa).

Residue Cys-49 participates in Zn(2+) binding. An NAD(+)-binding site is contributed by His-50. An alcohol-binding residues include Thr-51 and His-71. Positions 71, 72, 101, 104, 107, 115, and 179 each coordinate Zn(2+). NAD(+) contacts are provided by residues 204–209 (GLGTVG), Asp-228, Lys-233, Ile-274, 297–299 (VGV), 322–324 (TAF), and Arg-374.

The protein belongs to the zinc-containing alcohol dehydrogenase family. Class-III subfamily. As to quaternary structure, homodimer. Zn(2+) serves as cofactor. In terms of tissue distribution, expressed at low levels in the leaves.

The protein localises to the cytoplasm. The catalysed reaction is a primary alcohol + NAD(+) = an aldehyde + NADH + H(+). It carries out the reaction a secondary alcohol + NAD(+) = a ketone + NADH + H(+). It catalyses the reaction S-(hydroxymethyl)glutathione + NADP(+) = S-formylglutathione + NADPH + H(+). The enzyme catalyses S-(hydroxymethyl)glutathione + NAD(+) = S-formylglutathione + NADH + H(+). This chain is Alcohol dehydrogenase class-3 (FDH), found in Zea mays (Maize).